The primary structure comprises 178 residues: Ribosome maturation factor RimP (178 aa).

This sequence belongs to the RimP family.

The protein localises to the cytoplasm. Its function is as follows. Required for maturation of 30S ribosomal subunits. In Streptococcus pyogenes serotype M5 (strain Manfredo), this protein is Ribosome maturation factor RimP.